Here is a 126-residue protein sequence, read N- to C-terminus: Cystatin-like cysteine protease inhibitor EPIC1 (126 aa).

The signal sequence occupies residues 1–21 (MTFLRPILALLAATALVTTSA). N-linked (GlcNAc...) asparagine glycosylation is present at Asn46. The short motif at 69 to 73 (QVVSG) is the Secondary area of contact element.

Belongs to the cystatin family. As to quaternary structure, interacts with the host papain-like cysteine protease RCR3. Interacts with the host papain-like cysteine protease C14.

It is found in the secreted. In terms of biological role, secreted effector that interacts with and inhibits the pathogenesis-related papain-like cysteine proteases C14 and RCR3 of host plants. Inhibition of host proteases by a pathogen extracellular protease inhibitor forms a specific type of defense-counterdefense mechanism between plants and microbial pathogens. This chain is Cystatin-like cysteine protease inhibitor EPIC1, found in Phytophthora infestans (Potato late blight agent).